The chain runs to 1052 residues: Error-prone DNA polymerase (1052 aa).

It belongs to the DNA polymerase type-C family. DnaE2 subfamily.

Its subcellular location is the cytoplasm. It catalyses the reaction DNA(n) + a 2'-deoxyribonucleoside 5'-triphosphate = DNA(n+1) + diphosphate. Its function is as follows. DNA polymerase involved in damage-induced mutagenesis and translesion synthesis (TLS). It is not the major replicative DNA polymerase. The sequence is that of Error-prone DNA polymerase from Bordetella parapertussis (strain 12822 / ATCC BAA-587 / NCTC 13253).